Reading from the N-terminus, the 317-residue chain is Ricin B-like lectin EULS3 (317 aa).

The segment covering 1 to 11 has biased composition (basic residues); that stretch reads MEHHHQHHRHH. A disordered region spans residues 1 to 157; sequence MEHHHQHHRH…YHKPDENRLP (157 aa). Positions 25 to 36 are enriched in pro residues; that stretch reads VPPPHVDAPPQP. Positions 136 to 146 are enriched in polar residues; that stretch reads HSSNQPQSSSG. Positions 168–315 constitute a Ricin B-type lectin domain; sequence TVKVYSKAEP…KGDNQLWKIF (148 aa).

In terms of assembly, interacts (via N-terminus) with ATS3A and ATS3B. In terms of tissue distribution, expressed in roots, rosette leaves, stems, cauline leaves and flowers.

It localises to the nucleus. It is found in the cytoplasm. Lectin which binds carbohydrates in vitro. Interacts through its lectin domain with glycan structures containing one or more Lewis X, Lewis Y or lactosamine motifs. May play a role in abiotic stress responses. May play a role in abscisic acid-induced stomatal closure. May play a role in disease resistance against Pseudomonas syringae through its involvement in stomatal movement. This is Ricin B-like lectin EULS3 from Arabidopsis thaliana (Mouse-ear cress).